The primary structure comprises 422 residues: Serine hydroxymethyltransferase (422 aa).

(6S)-5,6,7,8-tetrahydrofolate is bound by residues leucine 120 and 124–126; that span reads GHL. N6-(pyridoxal phosphate)lysine is present on lysine 228.

The protein belongs to the SHMT family. As to quaternary structure, homodimer. Requires pyridoxal 5'-phosphate as cofactor.

Its subcellular location is the cytoplasm. It catalyses the reaction (6R)-5,10-methylene-5,6,7,8-tetrahydrofolate + glycine + H2O = (6S)-5,6,7,8-tetrahydrofolate + L-serine. Its pathway is one-carbon metabolism; tetrahydrofolate interconversion. The protein operates within amino-acid biosynthesis; glycine biosynthesis; glycine from L-serine: step 1/1. Its function is as follows. Catalyzes the reversible interconversion of serine and glycine with tetrahydrofolate (THF) serving as the one-carbon carrier. This reaction serves as the major source of one-carbon groups required for the biosynthesis of purines, thymidylate, methionine, and other important biomolecules. Also exhibits THF-independent aldolase activity toward beta-hydroxyamino acids, producing glycine and aldehydes, via a retro-aldol mechanism. In Actinobacillus succinogenes (strain ATCC 55618 / DSM 22257 / CCUG 43843 / 130Z), this protein is Serine hydroxymethyltransferase.